The sequence spans 396 residues: Bifunctional enzyme Fae/Hps (396 aa).

The interval 1 to 161 is formaldehyde-activating enzyme; sequence MMLIGEALIG…HEKDRAAHAV (161 aa). Residue histidine 17 is the Proton donor of the active site. Aspartate 19, leucine 48, lysine 66, threonine 68, and glutamine 83 together coordinate substrate. Residues 162-396 are 3-hexulose-6-phosphate synthase; it reads MGFKISKLWD…IDQFRIMTDF (235 aa).

It in the N-terminal section; belongs to the formaldehyde-activating enzyme family. The protein in the C-terminal section; belongs to the HPS/KGPDC family. HPS subfamily.

The enzyme catalyses 5,6,7,8-tetrahydromethanopterin + formaldehyde = 5,10-methylenetetrahydromethanopterin + H2O. It catalyses the reaction D-ribulose 5-phosphate + formaldehyde = D-arabino-hex-3-ulose 6-phosphate. It functions in the pathway carbohydrate biosynthesis; D-ribose 5-phosphate biosynthesis. Catalyzes the condensation of formaldehyde with tetrahydromethanopterin (H(4)MPT) to 5,10-methylenetetrahydromethanopterin. Functionally, catalyzes the reversible formation of ribulose-5-phosphate and formaldehyde from 3-hexulose-6-phosphate. This is Bifunctional enzyme Fae/Hps from Methanococcoides burtonii (strain DSM 6242 / NBRC 107633 / OCM 468 / ACE-M).